The primary structure comprises 267 residues: Acyl-[acyl-carrier-protein]--UDP-N-acetylglucosamine O-acyltransferase (267 aa).

The protein belongs to the transferase hexapeptide repeat family. LpxA subfamily. In terms of assembly, homotrimer.

Its subcellular location is the cytoplasm. The enzyme catalyses a (3R)-hydroxyacyl-[ACP] + UDP-N-acetyl-alpha-D-glucosamine = a UDP-3-O-[(3R)-3-hydroxyacyl]-N-acetyl-alpha-D-glucosamine + holo-[ACP]. It functions in the pathway glycolipid biosynthesis; lipid IV(A) biosynthesis; lipid IV(A) from (3R)-3-hydroxytetradecanoyl-[acyl-carrier-protein] and UDP-N-acetyl-alpha-D-glucosamine: step 1/6. Involved in the biosynthesis of lipid A, a phosphorylated glycolipid that anchors the lipopolysaccharide to the outer membrane of the cell. The chain is Acyl-[acyl-carrier-protein]--UDP-N-acetylglucosamine O-acyltransferase from Cupriavidus necator (strain ATCC 17699 / DSM 428 / KCTC 22496 / NCIMB 10442 / H16 / Stanier 337) (Ralstonia eutropha).